A 179-amino-acid chain; its full sequence is Large ribosomal subunit protein uL6 (179 aa).

The protein belongs to the universal ribosomal protein uL6 family. As to quaternary structure, part of the 50S ribosomal subunit.

Functionally, this protein binds to the 23S rRNA, and is important in its secondary structure. It is located near the subunit interface in the base of the L7/L12 stalk, and near the tRNA binding site of the peptidyltransferase center. The polypeptide is Large ribosomal subunit protein uL6 (Legionella pneumophila (strain Paris)).